The following is a 478-amino-acid chain: tRNA modification GTPase MnmE (478 aa).

(6S)-5-formyl-5,6,7,8-tetrahydrofolate is bound by residues arginine 25, glutamate 82, and lysine 135. In terms of domain architecture, TrmE-type G spans 231-400 (GIKVVIAGQP…LREQLLRVVG (170 aa)). Residue asparagine 241 participates in K(+) binding. GTP is bound by residues 241–246 (NVGKSS), 260–266 (TPVAGTT), and 285–288 (DTAG). Serine 245 is a Mg(2+) binding site. 3 residues coordinate K(+): threonine 260, valine 262, and threonine 265. Residue threonine 266 coordinates Mg(2+). Lysine 478 contacts (6S)-5-formyl-5,6,7,8-tetrahydrofolate.

The protein belongs to the TRAFAC class TrmE-Era-EngA-EngB-Septin-like GTPase superfamily. TrmE GTPase family. As to quaternary structure, homodimer. Heterotetramer of two MnmE and two MnmG subunits. Requires K(+) as cofactor.

It localises to the cytoplasm. Functionally, exhibits a very high intrinsic GTPase hydrolysis rate. Involved in the addition of a carboxymethylaminomethyl (cmnm) group at the wobble position (U34) of certain tRNAs, forming tRNA-cmnm(5)s(2)U34. This is tRNA modification GTPase MnmE from Polaromonas naphthalenivorans (strain CJ2).